The primary structure comprises 95 residues: Corticostatin-3 (95 aa).

Residues 1–19 (MRTLALLAAILLVALQAQA) form the signal peptide. Positions 20 to 62 (EHVSVSIDEVVDQQPPQAEDQDVAIYVKEHESSALEALGVKAG) are excised as a propeptide. Disulfide bonds link Cys-65/Cys-93, Cys-67/Cys-82, and Cys-72/Cys-92.

This sequence belongs to the alpha-defensin family.

It is found in the secreted. Functionally, this peptide has antibiotic, anti-fungi and antiviral activity. It also inhibits corticotropin (ACTH) stimulated corticosterone production. The sequence is that of Corticostatin-3 from Oryctolagus cuniculus (Rabbit).